The chain runs to 291 residues: Methionine aminopeptidase (291 aa).

Histidine 118 provides a ligand contact to substrate. 3 residues coordinate a divalent metal cation: aspartate 135, aspartate 146, and histidine 209. Position 216 (histidine 216) interacts with substrate. A divalent metal cation is bound by residues glutamate 241 and glutamate 273.

The protein belongs to the peptidase M24A family. Methionine aminopeptidase type 1 subfamily. In terms of assembly, monomer. The cofactor is Co(2+). Requires Zn(2+) as cofactor. It depends on Mn(2+) as a cofactor. Fe(2+) serves as cofactor.

It carries out the reaction Release of N-terminal amino acids, preferentially methionine, from peptides and arylamides.. In terms of biological role, removes the N-terminal methionine from nascent proteins. The N-terminal methionine is often cleaved when the second residue in the primary sequence is small and uncharged (Met-Ala-, Cys, Gly, Pro, Ser, Thr, or Val). Requires deformylation of the N(alpha)-formylated initiator methionine before it can be hydrolyzed. This chain is Methionine aminopeptidase, found in Chlamydia trachomatis serovar D (strain ATCC VR-885 / DSM 19411 / UW-3/Cx).